The primary structure comprises 493 residues: Ferruginol synthase 1 (493 aa).

A helical transmembrane segment spans residues 2–22; that stretch reads DSFPLLAALFFILAATWFISF. Heme is bound at residue C437.

Belongs to the cytochrome P450 family. Heme is required as a cofactor. As to expression, expressed in leaf glandular trichomes.

The protein localises to the membrane. It carries out the reaction abieta-8,11,13-triene + reduced [NADPH--hemoprotein reductase] + O2 = ferruginol + oxidized [NADPH--hemoprotein reductase] + H2O + H(+). The enzyme catalyses ferruginol + reduced [NADPH--hemoprotein reductase] + O2 = 11-hydroxyferruginol + oxidized [NADPH--hemoprotein reductase] + H2O + H(+). The catalysed reaction is miltiradiene + 2 reduced [NADPH--hemoprotein reductase] + 2 O2 = 11-oxomiltiradiene + 2 oxidized [NADPH--hemoprotein reductase] + 3 H2O + 2 H(+). The protein operates within secondary metabolite biosynthesis; terpenoid biosynthesis. In terms of biological role, monooxygenase involved in the biosynthesis of labdane-related diterpenes natural products. Catalyzes the oxidation of abietatriene to produce ferruginol. Catalyzes the oxidation of ferruginol at C-12 to produce 11-hydroxyferruginol. Ferruginol and 11-hydroxyferruginol are intermediates in the biosynthesis of carnosate, a potent antioxidant. May also convert miltiradiene into 11-oxomiltiradiene. This is Ferruginol synthase 1 from Rosmarinus officinalis (Rosemary).